We begin with the raw amino-acid sequence, 174 residues long: Adenine phosphoribosyltransferase (174 aa).

It belongs to the purine/pyrimidine phosphoribosyltransferase family. As to quaternary structure, homodimer.

The protein resides in the cytoplasm. The catalysed reaction is AMP + diphosphate = 5-phospho-alpha-D-ribose 1-diphosphate + adenine. The protein operates within purine metabolism; AMP biosynthesis via salvage pathway; AMP from adenine: step 1/1. Functionally, catalyzes a salvage reaction resulting in the formation of AMP, that is energically less costly than de novo synthesis. The sequence is that of Adenine phosphoribosyltransferase from Photobacterium profundum (strain SS9).